Here is a 207-residue protein sequence, read N- to C-terminus: Large ribosomal subunit protein uL4 (207 aa).

The disordered stretch occupies residues 55–75 (SAVRGGGRKPWRQKGTGRARQ). Residues 60–71 (GGRKPWRQKGTG) show a composition bias toward basic residues.

This sequence belongs to the universal ribosomal protein uL4 family. In terms of assembly, part of the 50S ribosomal subunit.

Its function is as follows. One of the primary rRNA binding proteins, this protein initially binds near the 5'-end of the 23S rRNA. It is important during the early stages of 50S assembly. It makes multiple contacts with different domains of the 23S rRNA in the assembled 50S subunit and ribosome. Forms part of the polypeptide exit tunnel. The chain is Large ribosomal subunit protein uL4 from Staphylococcus epidermidis (strain ATCC 35984 / DSM 28319 / BCRC 17069 / CCUG 31568 / BM 3577 / RP62A).